A 345-amino-acid chain; its full sequence is MKPWAAFHLIFLVASSLEGEVSNYGTRGAQDTEPTCRTEHQCTRDKIILQSQPGIPGIPGVPGTNGSEGLKGDPGPQGPPGIRGPDGIRGEAGPKGDKGDQGDKGDKGDKGDKGEDCNLDDCLPTEVRNCQDLLERGETLNGWYKIYPTEEVSMLVFCDMSTDGGGWLVFQRRQDGSVNFYREWESYKKGFGRQGSEFWLGNDKIHLLTNSGTQQLRIDLADFENIHTFATYSSFSIGNETEKYKLTLGSHLDGNMGDSLTLQNGRSFSTKDRDNDVSHIHCAVNFKGAWWYRKCHESNLNGLYHKGKHATYANGINWLTGKGYHYSYKYADMKIRPQKSETTVS.

The N-terminal stretch at 1-19 (MKPWAAFHLIFLVASSLEG) is a signal peptide. The interval 48–118 (ILQSQPGIPG…DKGDKGEDCN (71 aa)) is disordered. The Collagen-like domain maps to 57-114 (GIPGVPGTNGSEGLKGDPGPQGPPGIRGPDGIRGEAGPKGDKGDQGDKGDKGDKGDKG). Basic and acidic residues predominate over residues 86–116 (DGIRGEAGPKGDKGDQGDKGDKGDKGDKGED). A Fibrinogen C-terminal domain is found at 121 to 339 (DCLPTEVRNC…YADMKIRPQK (219 aa)). 2 disulfides stabilise this stretch: C130–C158 and C282–C295.

Belongs to the ficolin lectin family. Veficolin subfamily. Post-translationally, hydroxylated, possibly at Pro-80. In terms of tissue distribution, expressed by the venom duct.

The protein resides in the secreted. Functionally, initiates complement activation and/or interferes in platelet aggregation and/or blood coagulation. The protein is Ryncolin-4 of Cerberus rynchops (Dog-faced water snake).